A 243-amino-acid chain; its full sequence is Type III pantothenate kinase (243 aa).

Residue 6 to 13 (DIGNTVAK) coordinates ATP. Substrate-binding positions include Y86 and 93-96 (GYDR). D95 acts as the Proton acceptor in catalysis. D116 contributes to the K(+) binding site. Residue T119 coordinates ATP. T171 is a binding site for substrate.

Belongs to the type III pantothenate kinase family. Homodimer. NH4(+) is required as a cofactor. K(+) serves as cofactor.

The protein localises to the cytoplasm. It catalyses the reaction (R)-pantothenate + ATP = (R)-4'-phosphopantothenate + ADP + H(+). Its pathway is cofactor biosynthesis; coenzyme A biosynthesis; CoA from (R)-pantothenate: step 1/5. Catalyzes the phosphorylation of pantothenate (Pan), the first step in CoA biosynthesis. The sequence is that of Type III pantothenate kinase from Bacteroides fragilis (strain ATCC 25285 / DSM 2151 / CCUG 4856 / JCM 11019 / LMG 10263 / NCTC 9343 / Onslow / VPI 2553 / EN-2).